Reading from the N-terminus, the 145-residue chain is Deoxyuridine 5'-triphosphate nucleotidohydrolase (145 aa).

Substrate contacts are provided by residues 64–66 (RSG), Asn77, 81–83 (TID), and Met91.

Belongs to the dUTPase family. It depends on Mg(2+) as a cofactor.

It catalyses the reaction dUTP + H2O = dUMP + diphosphate + H(+). Its pathway is pyrimidine metabolism; dUMP biosynthesis; dUMP from dCTP (dUTP route): step 2/2. This enzyme is involved in nucleotide metabolism: it produces dUMP, the immediate precursor of thymidine nucleotides and it decreases the intracellular concentration of dUTP so that uracil cannot be incorporated into DNA. This is Deoxyuridine 5'-triphosphate nucleotidohydrolase from Leptospira borgpetersenii serovar Hardjo-bovis (strain JB197).